Consider the following 198-residue polypeptide: Holliday junction branch migration complex subunit RuvA (198 aa).

A domain I region spans residues 1–63 (MIALLTGQIA…EDAIQLYGFR (63 aa)). The segment at 64-142 (TSLEKSFFQL…KLDLSSVVVP (79 aa)) is domain II. Residues 143 to 153 (EPRQMPEDDLL) form a flexible linker region. The interval 153 to 198 (LEDVVSALLNLGYKEPQVRKVLAGLNPGSDASLEGVLKQALKSLMR) is domain III.

This sequence belongs to the RuvA family. Homotetramer. Forms an RuvA(8)-RuvB(12)-Holliday junction (HJ) complex. HJ DNA is sandwiched between 2 RuvA tetramers; dsDNA enters through RuvA and exits via RuvB. An RuvB hexamer assembles on each DNA strand where it exits the tetramer. Each RuvB hexamer is contacted by two RuvA subunits (via domain III) on 2 adjacent RuvB subunits; this complex drives branch migration. In the full resolvosome a probable DNA-RuvA(4)-RuvB(12)-RuvC(2) complex forms which resolves the HJ.

The protein localises to the cytoplasm. Functionally, the RuvA-RuvB-RuvC complex processes Holliday junction (HJ) DNA during genetic recombination and DNA repair, while the RuvA-RuvB complex plays an important role in the rescue of blocked DNA replication forks via replication fork reversal (RFR). RuvA specifically binds to HJ cruciform DNA, conferring on it an open structure. The RuvB hexamer acts as an ATP-dependent pump, pulling dsDNA into and through the RuvAB complex. HJ branch migration allows RuvC to scan DNA until it finds its consensus sequence, where it cleaves and resolves the cruciform DNA. In Pelobacter propionicus (strain DSM 2379 / NBRC 103807 / OttBd1), this protein is Holliday junction branch migration complex subunit RuvA.